The primary structure comprises 397 residues: Subtilisin-like serine protease Pen c 1 (397 aa).

The N-terminal stretch at 1 to 19 (MGFLKVLATSLATLAVVDA) is a signal peptide. Residues 20–115 (GTLLTASNTD…IEPDMIVNAT (96 aa)) constitute a propeptide, removed in mature form. Residues 35–113 (SYIVVMNDDV…KYIEPDMIVN (79 aa)) enclose the Inhibitor I9 domain. Residues 125 to 397 (SWGLARISSK…SKLLYNGINV (273 aa)) enclose the Peptidase S8 domain. Active-site charge relay system residues include Asp-157, His-188, and Ser-343.

The protein belongs to the peptidase S8 family.

It is found in the secreted. With respect to regulation, inhibited by 0.1 mM diisopropyl fluorophosphate (DFP), phenylmethanesulfonyl fluoride (PMSF), chymostatin and elastatinal. Not inhibited by N-alpha-p-tosyl-L-lysine chloromethylketone (TLCK), N-tosyl-L-phenylalanyl chloromethyl ketone (TPCK) or N-carbobenzoxy-L-phenylalanine chloromethylketone (ZPCK). Serine protease. Hydrolyzes azocasein. Cleaves peptide bonds of the oxidized insulin B chain preferably at 15-Leu-|-Tyr-16, but also at 4-Gln-|-His-5 and 24-Phe-|-Phe-25, and to a lesser extent at 5-His-|-Leu-6 and 25-Phe-|-Tyr-26. Hydrolyzes amide bonds between amino acids and 7-amino-4-methylcoumarin (AMC) in vitro. The sequence is that of Subtilisin-like serine protease Pen c 1 from Penicillium citrinum.